The primary structure comprises 360 residues: 3-dehydroquinate synthase (360 aa).

Residues 70-75, 104-108, 128-129, Lys-141, and Lys-150 each bind NAD(+); these read DGEKYK, GVIGD, and TT. Positions 183, 246, and 263 each coordinate Zn(2+).

The protein belongs to the sugar phosphate cyclases superfamily. Dehydroquinate synthase family. Co(2+) is required as a cofactor. Zn(2+) serves as cofactor. It depends on NAD(+) as a cofactor.

The protein localises to the cytoplasm. It catalyses the reaction 7-phospho-2-dehydro-3-deoxy-D-arabino-heptonate = 3-dehydroquinate + phosphate. Its pathway is metabolic intermediate biosynthesis; chorismate biosynthesis; chorismate from D-erythrose 4-phosphate and phosphoenolpyruvate: step 2/7. Catalyzes the conversion of 3-deoxy-D-arabino-heptulosonate 7-phosphate (DAHP) to dehydroquinate (DHQ). In Acinetobacter baumannii (strain AYE), this protein is 3-dehydroquinate synthase.